Consider the following 521-residue polypeptide: Probable feruloyl esterase B (521 aa).

The N-terminal stretch at 1–17 (MKVSSLLSVALPGAALA) is a signal peptide. Disulfide bonds link cysteine 26–cysteine 72 and cysteine 61–cysteine 111. Asparagine 37, asparagine 51, asparagine 77, asparagine 95, asparagine 144, and asparagine 177 each carry an N-linked (GlcNAc...) asparagine glycan. 3 disulfides stabilise this stretch: cysteine 184–cysteine 438, cysteine 253–cysteine 270, and cysteine 279–cysteine 288. Residue serine 185 is the Acyl-ester intermediate of the active site. Positions 254, 257, 259, 261, and 263 each coordinate Ca(2+). Asparagine 284, asparagine 347, asparagine 352, and asparagine 378 each carry an N-linked (GlcNAc...) asparagine glycan. Catalysis depends on charge relay system residues aspartate 397 and histidine 437. N-linked (GlcNAc...) asparagine glycans are attached at residues asparagine 488 and asparagine 511. A disulfide bridge connects residues cysteine 498 and cysteine 520.

It belongs to the tannase family.

Its subcellular location is the secreted. It catalyses the reaction feruloyl-polysaccharide + H2O = ferulate + polysaccharide.. In terms of biological role, involved in degradation of plant cell walls. Hydrolyzes the feruloyl-arabinose ester bond in arabinoxylans as well as the feruloyl-galactose and feruloyl-arabinose ester bonds in pectin. The protein is Probable feruloyl esterase B (faeB) of Aspergillus niger (strain ATCC MYA-4892 / CBS 513.88 / FGSC A1513).